The following is a 274-amino-acid chain: Glutamate--cysteine ligase regulatory subunit (274 aa).

Residue serine 59 is modified to Phosphoserine. Lysine 263 carries the post-translational modification N6-acetyllysine.

Belongs to the aldo/keto reductase family. Glutamate--cysteine ligase light chain subfamily. As to quaternary structure, heterodimer of a catalytic heavy chain and a regulatory light chain. In terms of tissue distribution, most abundant in kidney. Also found in liver and testis.

It participates in sulfur metabolism; glutathione biosynthesis; glutathione from L-cysteine and L-glutamate: step 1/2. This is Glutamate--cysteine ligase regulatory subunit (Gclm) from Rattus norvegicus (Rat).